The sequence spans 434 residues: [Pyruvate dehydrogenase (acetyl-transferring)] kinase isozyme 1, mitochondrial (434 aa).

The transit peptide at 1-26 (MRLARLLRGGTSVRPLCAVPCASRSL) directs the protein to the mitochondrion. Tyr136 carries the post-translational modification Phosphotyrosine; by FGFR1. In terms of domain architecture, Histidine kinase spans 161-391 (TEYKESFGVD…DAVIYIKALS (231 aa)). The residue at position 241 (Tyr241) is a Phosphotyrosine; by FGFR1, ABL1, FLT3 and JAK2. Tyr242 is subject to Phosphotyrosine; by FGFR1. Residues 277-284 (ELFKNAMR), Asp316, 335-336 (ST), and 352-357 (GFGYGL) contribute to the ATP site. A Phosphothreonine modification is found at Thr336. Position 403 is an N6-succinyllysine (Lys403).

It belongs to the PDK/BCKDK protein kinase family. Homodimer, and heterodimer with PDK2. Interacts with the pyruvate dehydrogenase complex subunit DLAT, and is part of the multimeric pyruvate dehydrogenase complex that contains multiple copies of pyruvate dehydrogenase (E1), dihydrolipoamide acetyltransferase (DLAT, E2) and lipoamide dehydrogenase (DLD, E3). Interacts with phosphoglycerate kinase PGK1; the interaction is direct, occurs under hypoxic conditions and leads to PDK1-mediated inhibition of pyruvate dehydrogenase complex activity. Phosphorylated by constitutively activated ABL1, FGFR1, FLT3 and JAK2 (in vitro), and this may also occur in cancer cells that express constitutively activated ABL1, FGFR1, FLT3 and JAK2. Phosphorylation at Tyr-241 and Tyr-242 strongly increases kinase activity, while phosphorylation at Tyr-136 has a lesser effect. Phosphorylated under hypoxic conditions at Thr-336 by phosphoglycerate kinase PGK1 which has an activating effect. As to expression, detected in pancreas islets (at protein level). Expressed predominantly in the heart.

It is found in the mitochondrion matrix. The enzyme catalyses L-seryl-[pyruvate dehydrogenase E1 alpha subunit] + ATP = O-phospho-L-seryl-[pyruvate dehydrogenase E1 alpha subunit] + ADP + H(+). With respect to regulation, activated by binding to the pyruvate dehydrogenase complex subunit DLAT. Strongly activated by NADH plus acetyl-coenzyme A. Inhibited by dichloroacetate. Its function is as follows. Kinase that plays a key role in regulation of glucose and fatty acid metabolism and homeostasis via phosphorylation of the pyruvate dehydrogenase subunits PDHA1 and PDHA2. This inhibits pyruvate dehydrogenase activity, and thereby regulates metabolite flux through the tricarboxylic acid cycle, down-regulates aerobic respiration and inhibits the formation of acetyl-coenzyme A from pyruvate. Plays an important role in cellular responses to hypoxia and is important for cell proliferation under hypoxia. In Rattus norvegicus (Rat), this protein is [Pyruvate dehydrogenase (acetyl-transferring)] kinase isozyme 1, mitochondrial (Pdk1).